The following is a 325-amino-acid chain: Cytochrome f (325 aa).

The signal sequence occupies residues 1-40 (MSKINLSTMWSSFIKKIAKTILVAIACISLFLTSSPAANA). Heme contacts are provided by tyrosine 41, cysteine 62, cysteine 65, and histidine 66. A helical membrane pass occupies residues 291–311 (VKWLMAFFALVMLAQIMLVLK).

The protein belongs to the cytochrome f family. As to quaternary structure, the 4 large subunits of the cytochrome b6-f complex are cytochrome b6, subunit IV (17 kDa polypeptide, PetD), cytochrome f and the Rieske protein, while the 4 small subunits are PetG, PetL, PetM and PetN. The complex functions as a dimer. Heme serves as cofactor.

Its subcellular location is the cellular thylakoid membrane. Its function is as follows. Component of the cytochrome b6-f complex, which mediates electron transfer between photosystem II (PSII) and photosystem I (PSI), cyclic electron flow around PSI, and state transitions. The sequence is that of Cytochrome f from Trichodesmium erythraeum (strain IMS101).